We begin with the raw amino-acid sequence, 587 residues long: Aspartate--tRNA ligase (587 aa).

Glutamate 175 lines the L-aspartate pocket. Positions 199-202 (QQFK) are aspartate. Residues arginine 221 and histidine 446 each coordinate L-aspartate. 221–223 (RDE) serves as a coordination point for ATP. Glutamate 480 is a binding site for ATP. An L-aspartate-binding site is contributed by arginine 487. 532 to 535 (GVDR) is an ATP binding site.

Belongs to the class-II aminoacyl-tRNA synthetase family. Type 1 subfamily. In terms of assembly, homodimer.

The protein localises to the cytoplasm. It catalyses the reaction tRNA(Asp) + L-aspartate + ATP = L-aspartyl-tRNA(Asp) + AMP + diphosphate. Functionally, catalyzes the attachment of L-aspartate to tRNA(Asp) in a two-step reaction: L-aspartate is first activated by ATP to form Asp-AMP and then transferred to the acceptor end of tRNA(Asp). This chain is Aspartate--tRNA ligase, found in Streptomyces coelicolor (strain ATCC BAA-471 / A3(2) / M145).